Reading from the N-terminus, the 1456-residue chain is CLIP-associating protein 1-B (1456 aa).

HEAT repeat units lie at residues 68-87, 88-124, and 163-200; these read LLGMDILSALVTRLQDRFRT, QIGTVLPSLMDRLGDAKDSVRDQDQNLLIKIMEQASN, and LTLSKIVPHICNLLGDPNSQVRDAAINCLVEIYRHVGE. The tract at residues 237–296 is disordered; the sequence is TDKNFDDEDSVDGNRPSSASSSASSKAPQTARRGVSLGTGRRPGTSSAAPKTGGTAKEGA. Low complexity predominate over residues 284–296; the sequence is AAPKTGGTAKEGA. The stretch at 442–479 is one HEAT 4 repeat; that stretch reads THVPRLIPIITSNCTSKSVAVRRRCYEFLDLLLQEWQT. 2 disordered regions span residues 547–728 and 776–796; these read SIVS…DRFG and GMYSDDDANSDASSACSERSY. A compositionally biased stretch (low complexity) spans 550-569; it reads SLPQSDRSSSSSQESLNRPL. A compositionally biased stretch (polar residues) spans 573–594; that stretch reads RSPTGSTVSRATSKSTTGSLQR. Low complexity-rich tracts occupy residues 603–618, 642–656, and 665–679; these read AAATSKTKAASGASTA, QSSGSTTSTASTPAD, and VVSQSQPGSRSSSPG. Over residues 711–721 the composition is skewed to polar residues; the sequence is QGCSRETSPSR. The span at 785 to 796 shows a compositional bias: low complexity; that stretch reads SDASSACSERSY. The HEAT 5 repeat unit spans residues 930 to 967; the sequence is QQFNILMRFIVDQTQTPNLKVKVAILKYIESLARQMDP. Disordered stretches follow at residues 1037–1080 and 1121–1147; these read LKNS…GLSP and VRRDGKKESEMGSCDAGMASPASDLRG. The span at 1038–1050 shows a compositional bias: low complexity; that stretch reads KNSSNSSMGSPSN. The span at 1062-1074 shows a compositional bias: polar residues; it reads SRASPLTSPTNCS. Basic and acidic residues predominate over residues 1121-1130; it reads VRRDGKKESE. HEAT repeat units lie at residues 1260 to 1297 and 1378 to 1415; these read EHFKTILLLLLETLGDKDHAIRALALRVLREILRNQPA and QILPDIIPGLLQGYDNTESSVRKASVFCLVAVYSVIGE.

Belongs to the CLASP family. Interacts (via C-terminus) with clip1/clip-170, and cenpe.

It localises to the cytoplasm. Its subcellular location is the cytoskeleton. It is found in the microtubule organizing center. The protein resides in the centrosome. The protein localises to the chromosome. It localises to the centromere. Its subcellular location is the kinetochore. It is found in the spindle. The protein resides in the golgi apparatus. The protein localises to the trans-Golgi network. In terms of biological role, microtubule plus-end tracking protein that promotes the stabilization of dynamic microtubules during anaphase. Plays a crucial role in chromatin-induced microtubule formation. May also act at microtubule minus ends. May be involved in the nucleation of noncentrosomal microtubules originating from the trans-Golgi network (TGN). The sequence is that of CLIP-associating protein 1-B from Xenopus laevis (African clawed frog).